Reading from the N-terminus, the 604-residue chain is Ras guanine nucleotide exchange factor H (604 aa).

Over residues 1–26 the composition is skewed to polar residues; the sequence is MSNTNINVQSSTPKKSLGSSQYSLAG. Residues 1–61 form a disordered region; the sequence is MSNTNINVQS…QENSIDDSGS (61 aa). Over residues 27-49 the composition is skewed to low complexity; the sequence is SSSSNLNNINNNNNNNNNNNNNS. Positions 50 to 61 are enriched in polar residues; that stretch reads TGQENSIDDSGS. One can recognise a LisH domain in the interval 115–147; that stretch reads NDTMLLKLIMQYFHEENLTTSLKKIQEETKVQF. One can recognise an N-terminal Ras-GEF domain in the interval 221 to 335; that stretch reads PDGTIKAATF…AVINLKIENY (115 aa). In terms of domain architecture, Ras-GEF spans 365-591; that stretch reads DEEEIARQLC…EQPQLTLDLS (227 aa).

Component of the Sca1 complex composed of at least gefA, gefH, scaA, phr, and the protein phosphatase 2A subunits pppA and pho2B. Interacts directly with gefA and phr.

The protein resides in the cell membrane. Promotes the exchange of Ras-bound GDP by GTP. Component of the Sca1 complex, a regulator of cell motility, chemotaxis and signal relay. The Sca1 complex is recruited to the plasma membrane in a chemoattractant- and F-actin-dependent manner and is enriched at the leading edge of chemotaxing cells where it regulates F-actin dynamics and signal relay by controlling the activation of rasC and the downstream target of rapamycin complex 2 (TORC2)-Akt/protein kinase B (PKB) pathway. The protein is Ras guanine nucleotide exchange factor H (gefH) of Dictyostelium discoideum (Social amoeba).